The following is a 93-amino-acid chain: Alpha-defensin 3 (93 aa).

The signal sequence occupies residues 1-16 (MKTLVLLSALVLLAFQ). Residues 17-58 (VQADPIQNTDEETKTEEQPGEDDQAVSVSFGDPEGSSLQEES) constitute a propeptide that is removed on maturation. The interval 22 to 56 (IQNTDEETKTEEQPGEDDQAVSVSFGDPEGSSLQE) is disordered. 3 disulfide bridges follow: Cys-64–Cys-92, Cys-66–Cys-81, and Cys-71–Cys-91.

This sequence belongs to the alpha-defensin family. Paneth cells of the small bowel.

The protein resides in the secreted. In terms of biological role, probably contributes to the antimicrobial barrier function of the small bowel mucosa. The polypeptide is Alpha-defensin 3 (Defa3) (Mus musculus (Mouse)).